The sequence spans 290 residues: Bifunctional protein FolD (290 aa).

NADP(+) contacts are provided by residues 165-167, S190, and I231; that span reads GRS.

The protein belongs to the tetrahydrofolate dehydrogenase/cyclohydrolase family. As to quaternary structure, homodimer.

The enzyme catalyses (6R)-5,10-methylene-5,6,7,8-tetrahydrofolate + NADP(+) = (6R)-5,10-methenyltetrahydrofolate + NADPH. It catalyses the reaction (6R)-5,10-methenyltetrahydrofolate + H2O = (6R)-10-formyltetrahydrofolate + H(+). It participates in one-carbon metabolism; tetrahydrofolate interconversion. Its function is as follows. Catalyzes the oxidation of 5,10-methylenetetrahydrofolate to 5,10-methenyltetrahydrofolate and then the hydrolysis of 5,10-methenyltetrahydrofolate to 10-formyltetrahydrofolate. The chain is Bifunctional protein FolD from Aromatoleum aromaticum (strain DSM 19018 / LMG 30748 / EbN1) (Azoarcus sp. (strain EbN1)).